The sequence spans 426 residues: GATA type zinc finger protein asd-4 (426 aa).

The GATA-type zinc-finger motif lies at 16–40 (CQNCATSTTPLWRRDEMGQVLCNAC). 2 disordered regions span residues 70-143 (RPDL…NPHI) and 159-178 (PGFGVPTASPGRAPSPMNGE). The segment covering 104-113 (PNNPAAAARR) has biased composition (low complexity). Residues 128 to 138 (SPVSRTGTPNV) are compositionally biased toward polar residues. The stretch at 182-292 (QTHEQLLAAN…QDNGRHKKIR (111 aa)) forms a coiled coil. Residues 306-318 (VEPQQPEQQQPAP) show a composition bias toward low complexity. Residues 306-426 (VEPQQPEQQQ…PVEEAPKAES (121 aa)) form a disordered region. Over residues 335-353 (APAPAPEAAPEQAPAPAPE) the composition is skewed to pro residues. Residues 354–419 (PVQEQAQEPE…SEPPTTAPVE (66 aa)) are compositionally biased toward low complexity.

In terms of assembly, homotetramer.

The protein localises to the nucleus. In terms of biological role, transcriptional regulator that functions in sexual development; disruption of asd-4 gene results in agenesis of ascus and ascospore with macroscopically normal fruiting body formation. The GATA-type zinc finger domain binds to DNA sequences from its own promoter region. In Neurospora crassa (strain ATCC 24698 / 74-OR23-1A / CBS 708.71 / DSM 1257 / FGSC 987), this protein is GATA type zinc finger protein asd-4 (asd-4).